Reading from the N-terminus, the 623-residue chain is MHRYRSHTCGDLRETDALQPTRLSGWCHRIRDHGGVLFIDLRDHYGITQCVVDPDSGAFPLAEKLRSEWVVRIDGLVRQRPAGTENIEMPTGLIEVYVTEIEVLGAAAELPLPVFGDQNYPEDMRLRYRFLDLRREKLHNNIMLRGRVIDSLRARMKGQGFFEFQTPILTASSPEGARDFLVPSRLHPGKFYALPQAPQQFKQLLMTAGFDRYFQIAPCFRDEDLRADRSLEFYQLDIEMSFVTQEDIFATVEPVLRGVFEEFGEGFAVTPEFPRIPYAETMLKYGTDKPDLRNPLVIVDVTEEFSREDVSFNAFKNVIKQGGVVRAIPAPGAGAQPRSFFDKLNDWARGEGAAGLGYVIFEGDAGALVGKGPIAKFLPADVQQAIAAKAGLKSGDAVFFACDRPDRAAKLAGAARLRIGSELKLSKTGVFELCWIVDFPMYEWNEDEKRIDFSHNPFSMPNCNLEQFLALETGVREEIVGIDRGERNRDLNESNELRKRILEITAFQYDVVCNGFELSSGAIRNHRPDIMRKAFALAGYDETVLEQKFGGMYRAFHYGAPPHGGIAPGVDRIVMLLAGEENLREIVAFPMNQRGEDLLLGAPSNVTAKQLRELSIKLNLPEK.

Residue glutamate 175 participates in L-aspartate binding. Positions 199–202 (QQFK) are aspartate. L-aspartate contacts are provided by arginine 221 and histidine 455. 221–223 (RDE) provides a ligand contact to ATP. Glutamate 517 serves as a coordination point for ATP. Arginine 524 contacts L-aspartate. 569-572 (GVDR) is a binding site for ATP.

It belongs to the class-II aminoacyl-tRNA synthetase family. Type 1 subfamily. In terms of assembly, homodimer.

Its subcellular location is the cytoplasm. The enzyme catalyses tRNA(Asx) + L-aspartate + ATP = L-aspartyl-tRNA(Asx) + AMP + diphosphate. Functionally, aspartyl-tRNA synthetase with relaxed tRNA specificity since it is able to aspartylate not only its cognate tRNA(Asp) but also tRNA(Asn). Reaction proceeds in two steps: L-aspartate is first activated by ATP to form Asp-AMP and then transferred to the acceptor end of tRNA(Asp/Asn). The protein is Aspartate--tRNA(Asp/Asn) ligase of Methylocella silvestris (strain DSM 15510 / CIP 108128 / LMG 27833 / NCIMB 13906 / BL2).